The sequence spans 606 residues: Glutamine--fructose-6-phosphate aminotransferase [isomerizing] (606 aa).

Cys2 functions as the Nucleophile; for GATase activity in the catalytic mechanism. A Glutamine amidotransferase type-2 domain is found at 2–217 (CGIVGMVGEN…DGDVMVLRKD (216 aa)). SIS domains are found at residues 284–423 (YEEL…INGY) and 455–596 (LSEK…PDKP). Lys601 functions as the For Fru-6P isomerization activity in the catalytic mechanism.

In terms of assembly, homodimer.

It localises to the cytoplasm. It catalyses the reaction D-fructose 6-phosphate + L-glutamine = D-glucosamine 6-phosphate + L-glutamate. In terms of biological role, catalyzes the first step in hexosamine metabolism, converting fructose-6P into glucosamine-6P using glutamine as a nitrogen source. In Thermotoga maritima (strain ATCC 43589 / DSM 3109 / JCM 10099 / NBRC 100826 / MSB8), this protein is Glutamine--fructose-6-phosphate aminotransferase [isomerizing].